Reading from the N-terminus, the 892-residue chain is DNA mismatch repair protein MutS (892 aa).

Residue 607–614 (GPNMSGKS) participates in ATP binding. Residues 826–854 (ETKAETEEESQLSFFGGEQSSKKQDKPVL) are disordered. Residues 845–854 (SSKKQDKPVL) are compositionally biased toward basic and acidic residues.

Belongs to the DNA mismatch repair MutS family.

Its function is as follows. This protein is involved in the repair of mismatches in DNA. It is possible that it carries out the mismatch recognition step. This protein has a weak ATPase activity. The protein is DNA mismatch repair protein MutS of Bacillus cereus (strain AH187).